The chain runs to 131 residues: Torsin-1A-interacting protein 2, isoform IFRG15 (131 aa).

The chain is Torsin-1A-interacting protein 2, isoform IFRG15 (Tor1aip2) from Mus musculus (Mouse).